The sequence spans 83 residues: Host transcription reprogramming factor 9 (83 aa).

A signal peptide spans 1–19 (MQFSKITLAIVLYALGTAA). The segment at 54–77 (YRCDKCEKEFVKGNDFFNHGGRGH) adopts a C2H2-type zinc-finger fold.

The protein localises to the secreted. The protein resides in the host nucleus. Its function is as follows. Probable secreted effector that translocates into the nuclei of host cells to reprogram the expression of targeted genes by binding on effector binding elements in rice. The sequence is that of Host transcription reprogramming factor 9 from Pyricularia oryzae (strain 70-15 / ATCC MYA-4617 / FGSC 8958) (Rice blast fungus).